Consider the following 378-residue polypeptide: Chaperone protein DnaJ (378 aa).

The J domain maps to 5 to 70 (DYYEVLGVAK…QKRAAYDQYG (66 aa)). A CR-type zinc finger spans residues 138 to 216 (GYDTQIRVPS…CHGSGKVKET (79 aa)). Zn(2+) is bound by residues cysteine 151, cysteine 154, cysteine 168, cysteine 171, cysteine 190, cysteine 193, cysteine 204, and cysteine 207. CXXCXGXG motif repeat units lie at residues 151-158 (CEVCHGSG), 168-175 (CPTCHGQG), 190-197 (CPKCHGTG), and 204-211 (CAHCHGSG).

Belongs to the DnaJ family. As to quaternary structure, homodimer. Zn(2+) serves as cofactor.

It is found in the cytoplasm. Functionally, participates actively in the response to hyperosmotic and heat shock by preventing the aggregation of stress-denatured proteins and by disaggregating proteins, also in an autonomous, DnaK-independent fashion. Unfolded proteins bind initially to DnaJ; upon interaction with the DnaJ-bound protein, DnaK hydrolyzes its bound ATP, resulting in the formation of a stable complex. GrpE releases ADP from DnaK; ATP binding to DnaK triggers the release of the substrate protein, thus completing the reaction cycle. Several rounds of ATP-dependent interactions between DnaJ, DnaK and GrpE are required for fully efficient folding. Also involved, together with DnaK and GrpE, in the DNA replication of plasmids through activation of initiation proteins. The chain is Chaperone protein DnaJ from Burkholderia cenocepacia (strain HI2424).